Reading from the N-terminus, the 280-residue chain is UDP-3-O-acyl-N-acetylglucosamine deacetylase (280 aa).

Positions 79, 237, and 241 each coordinate Zn(2+). The active-site Proton donor is the His264.

Belongs to the LpxC family. Zn(2+) serves as cofactor.

It catalyses the reaction a UDP-3-O-[(3R)-3-hydroxyacyl]-N-acetyl-alpha-D-glucosamine + H2O = a UDP-3-O-[(3R)-3-hydroxyacyl]-alpha-D-glucosamine + acetate. It participates in glycolipid biosynthesis; lipid IV(A) biosynthesis; lipid IV(A) from (3R)-3-hydroxytetradecanoyl-[acyl-carrier-protein] and UDP-N-acetyl-alpha-D-glucosamine: step 2/6. Functionally, catalyzes the hydrolysis of UDP-3-O-myristoyl-N-acetylglucosamine to form UDP-3-O-myristoylglucosamine and acetate, the committed step in lipid A biosynthesis. This is UDP-3-O-acyl-N-acetylglucosamine deacetylase from Chlamydia felis (strain Fe/C-56) (Chlamydophila felis).